We begin with the raw amino-acid sequence, 800 residues long: MSEIIQDLSLEDVLGDRFGRYSKYIIQERALPDVRDGLKPVQRRILYAMYSSGNTHDKNFRKSAKTVGDVIGQYHPHGDFSVYEAMVRLSQDWKLRHVLIEMHGNNGSIDNDPPAAMRYTEAKLSLLAEELLRDINKETVSFISNYDDTTLEPMVLPSRFPNLLVNGSTGISAGYATDIPPHNLAEVIQATLKYIDNPDITVNQLMKYIKGPDFPTGGIIQGIDGIKKAYESGKGRIIVRSKVEEETLRNGRKQLIITEIPYEVNKSSLVKRIDELRADKKVDGIVEVRDETDRTGLRIAIELKKDVNSESIKNYLYKNSDLQISYNFNMVAISDGRPKLMGIRQIIDSYLNHQIEVVANRTKFELDNAEKRMHIVEGLIKALSILDKVIELIRSSKNKRDAKENLIEVYEFTEEQAEAIVMLQLYRLTNTDIVALEGEHKELEALIKQLRHILDNHDALLNVIKEELNEIKKKFKSERLSLIEAEIEEIKIDKEVMVPSEEVILSMTRHGYIKRTSIRSYNASGVEDIGLKDGDSLLKHQEVNTQDTVLVFTNKGRYLFIPVHKLADIRWKELGQHVSQIVPIEEDEVVINVFNEKDFNTDAFYVFATQNGMIKKSTVPLFKTTRFNKPLIATKVKENDDLISVMRFEKDQLITIITNKGMSLTYNTSELSDTGLRAAGVKSINLKAEDFVVMTEGVSENDTILMATQRGSLKRISFKILQVAKRAQRGITLLKELKKNPHRIVAAHVVTGEHSQYTLYSKSNEEHGLINDIHKSEQYTNGSFIVDTDDFGEVIDMYIS.

Residues 31–495 form the Topo IIA-type catalytic domain; the sequence is LPDVRDGLKP…EIEEIKIDKE (465 aa). The active-site O-(5'-phospho-DNA)-tyrosine intermediate is the Y119.

This sequence belongs to the type II topoisomerase GyrA/ParC subunit family. ParC type 2 subfamily. Heterotetramer composed of ParC and ParE.

The protein resides in the cell membrane. It catalyses the reaction ATP-dependent breakage, passage and rejoining of double-stranded DNA.. Functionally, topoisomerase IV is essential for chromosome segregation. It relaxes supercoiled DNA. Performs the decatenation events required during the replication of a circular DNA molecule. The polypeptide is DNA topoisomerase 4 subunit A (Staphylococcus aureus (strain MRSA252)).